The following is a 116-amino-acid chain: Large ribosomal subunit protein bL20 (116 aa).

Belongs to the bacterial ribosomal protein bL20 family.

Functionally, binds directly to 23S ribosomal RNA and is necessary for the in vitro assembly process of the 50S ribosomal subunit. It is not involved in the protein synthesizing functions of that subunit. The sequence is that of Large ribosomal subunit protein bL20 from Helicobacter acinonychis (strain Sheeba).